A 602-amino-acid chain; its full sequence is MKRILPLILALVAGMAQADSNSDYRAGSDFAHQIKGQGSSSIQGFKPQESIPGYNANPDETKYYGGVTAGGDGGLKNDGTTEWATGETGKTITESFMNKPKDILSPDAPFIQTGRDVVNRADSIVGNTGQQCSAQEISRSEYTNYTCERDLQVEQYCTRTARMELQGSTTWETRTLEYEMSQLPAREVNGQYVVSITSPVTGEIVDAHYSWSRTYLQKSVPMTITVLGTPLSWNAKYSADASFTPVQKTLTAGVAFTSSHPVRVGNTKFKRHTAMKLRLVVRVKKASYTPYVVWSESCPFSKELGKLTKTECTEAGGNRTLVKDGQSYSMYQSCWAYRDTYVTQSADKGTCQTYTDNPACTLVSHQCAFYSEEGACLHEYATYSCESKTSGKVMVCGGDVFCLDGECDKAQSGKSNDFAEAVSQLAALAAAGKDVAALNGVDVRAFTGQAKFCKKAAAGYSNCCKDSGWGQDIGLAKCSSDEKALAKAKSNKLTVSVGEFCSKKVLGVCLEKKRSYCQFDSKLAQIVQQQGRNGQLRISFGSAKHPDCRGITVDELQKIQFNRLDFTNFYEDLMNNQKIPDSGVLTQKVKEQIADQLKQAGQ.

Residues 1 to 18 (MKRILPLILALVAGMAQA) form the signal peptide.

In terms of assembly, interacts with OmpA of recipient cells. Might form multimers. May interact with TraG. Has higher gel mobility under non-reducing conditions, suggesting it has disulfide bonds; a dsbA deletion mutant has considerably less TraN that is still localized in the outer membrane.

It is found in the cell outer membrane. Its function is as follows. Essential for F plasmid conjugative transfer. May interact with the recipient cell surface to stabilize mating pairs initiated by F-pili. May interact with TraG. Transfer requires OmpA and lipopolysaccharide (LPS), which are possibly receptors for TraN. The protein is Mating pair stabilization protein TraN (traN) of Escherichia coli (strain K12).